A 243-amino-acid chain; its full sequence is 1-(5-phosphoribosyl)-5-[(5-phosphoribosylamino)methylideneamino] imidazole-4-carboxamide isomerase (243 aa).

The active-site Proton acceptor is the aspartate 10. The active-site Proton donor is aspartate 128.

Belongs to the HisA/HisF family.

It localises to the cytoplasm. It catalyses the reaction 1-(5-phospho-beta-D-ribosyl)-5-[(5-phospho-beta-D-ribosylamino)methylideneamino]imidazole-4-carboxamide = 5-[(5-phospho-1-deoxy-D-ribulos-1-ylimino)methylamino]-1-(5-phospho-beta-D-ribosyl)imidazole-4-carboxamide. Its pathway is amino-acid biosynthesis; L-histidine biosynthesis; L-histidine from 5-phospho-alpha-D-ribose 1-diphosphate: step 4/9. The chain is 1-(5-phosphoribosyl)-5-[(5-phosphoribosylamino)methylideneamino] imidazole-4-carboxamide isomerase from Helicobacter hepaticus (strain ATCC 51449 / 3B1).